Here is a 212-residue protein sequence, read N- to C-terminus: Small ribosomal subunit protein uS3 (212 aa).

In terms of domain architecture, KH type-2 spans 39 to 108; that stretch reads IKNYIKERYK…EITISVVEVR (70 aa).

The protein belongs to the universal ribosomal protein uS3 family. Part of the 30S ribosomal subunit. Forms a tight complex with proteins S10 and S14.

Functionally, binds the lower part of the 30S subunit head. Binds mRNA in the 70S ribosome, positioning it for translation. This is Small ribosomal subunit protein uS3 from Aquifex aeolicus (strain VF5).